Consider the following 314-residue polypeptide: GTPase Era (314 aa).

The 169-residue stretch at 21 to 189 folds into the Era-type G domain; it reads KSGFVGIIGR…QKTLINLLEP (169 aa). The G1 stretch occupies residues 29–36; the sequence is GRPNVGKS. 29-36 is a binding site for GTP; sequence GRPNVGKS. A G2 region spans residues 55-59; it reads QTTRN. A G3 region spans residues 76-79; that stretch reads DTPG. GTP is bound by residues 76 to 80 and 138 to 141; these read DTPGI and NKSD. The interval 138–141 is G4; that stretch reads NKSD. The segment at 168–170 is G5; it reads FSA. The region spanning 212-296 is the KH type-2 domain; it reads IREQILQQTR…YLQLFVKVEP (85 aa).

It belongs to the TRAFAC class TrmE-Era-EngA-EngB-Septin-like GTPase superfamily. Era GTPase family. In terms of assembly, monomer.

It is found in the cytoplasm. The protein localises to the cell inner membrane. In terms of biological role, an essential GTPase that binds both GDP and GTP, with rapid nucleotide exchange. Plays a role in 16S rRNA processing and 30S ribosomal subunit biogenesis and possibly also in cell cycle regulation and energy metabolism. The polypeptide is GTPase Era (Rippkaea orientalis (strain PCC 8801 / RF-1) (Cyanothece sp. (strain PCC 8801))).